A 486-amino-acid polypeptide reads, in one-letter code: Serine/threonine-protein kinase 32C (486 aa).

The tract at residues 1 to 56 is disordered; that stretch reads MRSGAERRGSSAAASPGSPPPGRARPAGSDAPSALPPPAAGQPRARDSGDVRSQPR. Phosphoserine is present on residues S10, S15, and S18. Low complexity predominate over residues 24-33; it reads ARPAGSDAPS. The 261-residue stretch at 93-353 folds into the Protein kinase domain; that stretch reads FQILRAIGKG…LQDVQAAPAL (261 aa). ATP is bound by residues 99-107 and K122; that span reads IGKGSFGKV. D216 functions as the Proton acceptor in the catalytic mechanism. The span at 396–405 shows a compositional bias: basic residues; that stretch reads HKKKKRLAKN. Disordered stretches follow at residues 396–419 and 444–486; these read HKKKKRLAKNKSRDNSRDSSQSEN and SQDL…AGSG.

It belongs to the protein kinase superfamily. Ser/Thr protein kinase family. The cofactor is Mg(2+).

The catalysed reaction is L-seryl-[protein] + ATP = O-phospho-L-seryl-[protein] + ADP + H(+). The enzyme catalyses L-threonyl-[protein] + ATP = O-phospho-L-threonyl-[protein] + ADP + H(+). This is Serine/threonine-protein kinase 32C from Homo sapiens (Human).